Here is a 347-residue protein sequence, read N- to C-terminus: Heme A synthase (347 aa).

The next 8 membrane-spanning stretches (helical) occupy residues 17 to 37 (LANW…VGGI), 106 to 126 (GIGA…AIPA), 132 to 152 (MIGI…MVYS), 165 to 185 (LATH…TVLD), 202 to 222 (ALAI…AFVA), 260 to 280 (IVVQ…ALAV), 295 to 315 (AVAT…LTGV), and 317 to 337 (IAVA…LLWA). Residue His-266 participates in heme binding. Heme is bound at residue His-323.

This sequence belongs to the COX15/CtaA family. Type 2 subfamily. As to quaternary structure, interacts with CtaB. Requires heme b as cofactor.

It localises to the cell membrane. It carries out the reaction Fe(II)-heme o + 2 A + H2O = Fe(II)-heme a + 2 AH2. It functions in the pathway porphyrin-containing compound metabolism; heme A biosynthesis; heme A from heme O: step 1/1. Its function is as follows. Catalyzes the conversion of heme O to heme A by two successive hydroxylations of the methyl group at C8. The first hydroxylation forms heme I, the second hydroxylation results in an unstable dihydroxymethyl group, which spontaneously dehydrates, resulting in the formyl group of heme A. This chain is Heme A synthase, found in Rhizorhabdus wittichii (strain DSM 6014 / CCUG 31198 / JCM 15750 / NBRC 105917 / EY 4224 / RW1) (Sphingomonas wittichii).